Reading from the N-terminus, the 469-residue chain is Glutamate--tRNA ligase 1 (469 aa).

Residues 11–21 (PSPTGHLHLGG) carry the 'HIGH' region motif. The short motif at 238-242 (KLSKR) is the 'KMSKS' region element. Lysine 241 is a binding site for ATP.

Belongs to the class-I aminoacyl-tRNA synthetase family. Glutamate--tRNA ligase type 1 subfamily. Monomer.

It is found in the cytoplasm. It catalyses the reaction tRNA(Glu) + L-glutamate + ATP = L-glutamyl-tRNA(Glu) + AMP + diphosphate. Catalyzes the attachment of glutamate to tRNA(Glu) in a two-step reaction: glutamate is first activated by ATP to form Glu-AMP and then transferred to the acceptor end of tRNA(Glu). This is Glutamate--tRNA ligase 1 from Ehrlichia canis (strain Jake).